Consider the following 449-residue polypeptide: MGRMFGTDGVRGIANKELTADLAYKLGKAGAFILTEGTHRPKILVGMDTRISGDMLESALVAGILSVGAEAICVGVIPTPAIAYLTRKYNADAGVVISASHNPVEYNGIKFFNKNGYKLSDELEDNIQALIENNFKDVPVLTGENIGRKIEEDGEAIRDYIDFAKSTIKGDLKGLKVALDCANGASYITSVEAFKELGAEVHVINNKPDGININRNSGSTHPEDLIEYVVKNSCQIGLAFDGDADRCLAIDEKGNLINGDFILAICGKELKKQGRLKKNTIVVTVMSNLGLDIAMKKEEINTIKTKVGDRYVLEEMLRNDYAIGGEQSGHIIFSDYNTTGDGLVTALQLAHIVKESGKTFSELCSIMKELPQVLVNAKVPNDQKDIYLKDEEIKSEIDTITKNLDGSGRVLIRPSGTEPLVRVMLEGENQGEIDKLAHGLAKLIEKKVK.

Catalysis depends on Ser-100, which acts as the Phosphoserine intermediate. Mg(2+) contacts are provided by Ser-100, Asp-241, Asp-243, and Asp-245. Ser-100 is modified (phosphoserine).

Belongs to the phosphohexose mutase family. Requires Mg(2+) as cofactor. Post-translationally, activated by phosphorylation.

The catalysed reaction is alpha-D-glucosamine 1-phosphate = D-glucosamine 6-phosphate. Catalyzes the conversion of glucosamine-6-phosphate to glucosamine-1-phosphate. This chain is Phosphoglucosamine mutase, found in Clostridium botulinum (strain Loch Maree / Type A3).